A 162-amino-acid chain; its full sequence is Transcription elongation factor GreA (162 aa).

A coiled-coil region spans residues 45-74; sequence ENAEYEAAREKQAFIEGRIKELEDMTARAE.

This sequence belongs to the GreA/GreB family.

Its function is as follows. Necessary for efficient RNA polymerase transcription elongation past template-encoded arresting sites. The arresting sites in DNA have the property of trapping a certain fraction of elongating RNA polymerases that pass through, resulting in locked ternary complexes. Cleavage of the nascent transcript by cleavage factors such as GreA or GreB allows the resumption of elongation from the new 3'terminus. GreA releases sequences of 2 to 3 nucleotides. The polypeptide is Transcription elongation factor GreA (Rickettsia conorii (strain ATCC VR-613 / Malish 7)).